The chain runs to 155 residues: F-box only protein 48 (155 aa).

A disordered region spans residues 1-27; it reads MHKNSKRNNNLRVSHTEANSVDAEKEK. The segment covering 7 to 19 has biased composition (polar residues); it reads RNNNLRVSHTEAN. Residues 32–79 form the F-box domain; the sequence is NNFFELLPAEITFKIFSQLDIRSLCRASLTCRSWNDTIRNSDSLWKPH.

This Homo sapiens (Human) protein is F-box only protein 48 (FBXO48).